The sequence spans 471 residues: Putative multidrug resistance protein MdtD (471 aa).

Residues 1–11 (MTDLPDSTRWQ) are Periplasmic-facing. The helical transmembrane segment at 12-32 (LWIVAFGFFMQSLDTTIVNTA) threads the bilayer. At 33–48 (LPSMAQSLGESPLHMH) the chain is on the cytoplasmic side. Residues 49–69 (MVIVSYVLTVAVMLPASGWLA) form a helical membrane-spanning segment. The Periplasmic portion of the chain corresponds to 70-76 (DKVGVRN). A helical transmembrane segment spans residues 77 to 97 (IFFTAIVLFTLGSLFCALSGT). The Cytoplasmic portion of the chain corresponds to 98–101 (LNEL). The chain crosses the membrane as a helical span at residues 102–124 (LLARALQGVGGAMMVPVGRLTVM). Topologically, residues 125–137 (KIVPREQYMAAMT) are periplasmic. The helical transmembrane segment at 138-158 (FVTLPGQVGPLLGPALGGLLV) threads the bilayer. Residues 159-164 (EYASWH) lie on the Cytoplasmic side of the membrane. A helical transmembrane segment spans residues 165-185 (WIFLINIPVGIIGAIATLMLM). At 186 to 196 (PNYTMQTRRFD) the chain is on the periplasmic side. Residues 197 to 217 (LSGFLLLAVGMAVLTLALDGS) form a helical membrane-spanning segment. Residues 218 to 224 (KGTGFSP) lie on the Cytoplasmic side of the membrane. Residues 225–245 (LAIAGLVAVGVVALVLYLLHA) form a helical membrane-spanning segment. At 246-262 (QNNNRALFSLKLFRTRN) the chain is on the periplasmic side. The chain crosses the membrane as a helical span at residues 263–283 (FSLGLAGSFAGRIGSGMLPFM). At 284–285 (TP) the chain is on the cytoplasmic side. A helical transmembrane segment spans residues 286-306 (VFLQIGLGFSPFHAGLMMIPM). Residues 307 to 341 (VLGSMGMKRIVVQVVNRFGYRRVLVATTLGLSLVT) are Periplasmic-facing. The chain crosses the membrane as a helical span at residues 342–362 (LLFMTTALLGWYYVLPFVLFL). The Cytoplasmic segment spans residues 363–395 (QGMVNSTRFSSMNTLTLKDLPDNLASSGNSLLS). Residues 396–416 (MIMQLSMSIGVTIAGLLLGLF) traverse the membrane as a helical segment. Over 417–430 (GSQHVSVDSGTTQT) the chain is Periplasmic. Residues 431 to 451 (VFMYTWLSMAFIIALPAFVFA) traverse the membrane as a helical segment. Topologically, residues 452 to 471 (RVPSDTHQNVAISRRKRSAQ) are cytoplasmic.

Belongs to the major facilitator superfamily. TCR/Tet family.

The protein resides in the cell inner membrane. In Escherichia coli O1:K1 / APEC, this protein is Putative multidrug resistance protein MdtD.